The chain runs to 75 residues: Cytochrome c oxidase subunit 6C (75 aa).

At methionine 1–glycine 13 the chain is on the mitochondrial matrix side. The chain crosses the membrane as a helical span at residues leucine 14–arginine 54. Topologically, residues asparagine 55 to lysine 75 are mitochondrial intermembrane.

This sequence belongs to the cytochrome c oxidase subunit 6c family. Component of the cytochrome c oxidase (complex IV, CIV), a multisubunit enzyme composed of 14 subunits. The complex is composed of a catalytic core of 3 subunits MT-CO1, MT-CO2 and MT-CO3, encoded in the mitochondrial DNA, and 11 supernumerary subunits COX4I, COX5A, COX5B, COX6A, COX6B, COX6C, COX7A, COX7B, COX7C, COX8 and NDUFA4, which are encoded in the nuclear genome. The complex exists as a monomer or a dimer and forms supercomplexes (SCs) in the inner mitochondrial membrane with NADH-ubiquinone oxidoreductase (complex I, CI) and ubiquinol-cytochrome c oxidoreductase (cytochrome b-c1 complex, complex III, CIII), resulting in different assemblies (supercomplex SCI(1)III(2)IV(1) and megacomplex MCI(2)III(2)IV(2)).

Its subcellular location is the mitochondrion inner membrane. Its pathway is energy metabolism; oxidative phosphorylation. Its function is as follows. Component of the cytochrome c oxidase, the last enzyme in the mitochondrial electron transport chain which drives oxidative phosphorylation. The respiratory chain contains 3 multisubunit complexes succinate dehydrogenase (complex II, CII), ubiquinol-cytochrome c oxidoreductase (cytochrome b-c1 complex, complex III, CIII) and cytochrome c oxidase (complex IV, CIV), that cooperate to transfer electrons derived from NADH and succinate to molecular oxygen, creating an electrochemical gradient over the inner membrane that drives transmembrane transport and the ATP synthase. Cytochrome c oxidase is the component of the respiratory chain that catalyzes the reduction of oxygen to water. Electrons originating from reduced cytochrome c in the intermembrane space (IMS) are transferred via the dinuclear copper A center (CU(A)) of subunit 2 and heme A of subunit 1 to the active site in subunit 1, a binuclear center (BNC) formed by heme A3 and copper B (CU(B)). The BNC reduces molecular oxygen to 2 water molecules using 4 electrons from cytochrome c in the IMS and 4 protons from the mitochondrial matrix. This Trachypithecus cristatus (Silvered leaf-monkey) protein is Cytochrome c oxidase subunit 6C (COX6C).